A 371-amino-acid polypeptide reads, in one-letter code: MPVLFSSRSLILSIIVPLLISIALYKLDTFDPAIVPSDAFTSSATSLPPLINDEFLTGAEFIGVGLLNIPEDIAYHKESNLIYTGCVDGWVKRVKVADSVNDSVVEDWVNTGGRPLGIAFGIHGEVIVADVHKGLLNISGDGKKTELLTDEADGVKFKLTDAVTVADNGVLYFTDASYKYTLNQLSLDMLEGKPFGRLLSFDPTTRVTKVLLKDLYFANGITISPDQTHLIFCETPMKRCSKYYISEERVEVFTQSLPGYPDNIRYDGDGHYWIALPSGVTTLWNISLKYPFLRKLTAMVAKYGVDLMFMENAGVLQVDLDGNPIAYYHDPKLSHIATCDKIGKYLYCGSLSQSHILRLDLLKYPAQNKKL.

The first 25 residues, 1–25 (MPVLFSSRSLILSIIVPLLISIALY), serve as a signal peptide directing secretion. 3 N-linked (GlcNAc...) asparagine glycosylation sites follow: N101, N137, and N285. Y303 is subject to Phosphotyrosine.

It belongs to the strictosidine synthase family.

The protein resides in the vacuole. The polypeptide is Protein STRICTOSIDINE SYNTHASE-LIKE 7 (Arabidopsis thaliana (Mouse-ear cress)).